The chain runs to 293 residues: Small ribosomal subunit protein uS2 (293 aa).

The disordered stretch occupies residues 219–293 (IASAKPDEPY…WATPKTEDWA (75 aa)).

Belongs to the universal ribosomal protein uS2 family. As to quaternary structure, component of the small ribosomal subunit. Mature ribosomes consist of a small (40S) and a large (60S) subunit. The 40S subunit contains about 33 different proteins and 1 molecule of RNA (18S). The 60S subunit contains about 49 different proteins and 3 molecules of RNA (28S, 5.8S and 5S). Interacts with ribosomal protein S21.

The protein resides in the cytoplasm. Functionally, required for the assembly and/or stability of the 40S ribosomal subunit. Required for the processing of the 20S rRNA-precursor to mature 18S rRNA in a late step of the maturation of 40S ribosomal subunits. The protein is Small ribosomal subunit protein uS2 of Hydra viridissima (Green hydra).